The sequence spans 332 residues: Homoarginine-6-hydroxylase 2-ODD-C23.1 (332 aa).

A Fe2OG dioxygenase domain is found at 182 to 287 (PFWVMRLIGY…RVCVAFFYET (106 aa)). Fe cation-binding residues include His-210, Asp-212, and His-268. Position 278 (Arg-278) interacts with 2-oxoglutarate.

Belongs to the iron/ascorbate-dependent oxidoreductase family. Fe(2+) serves as cofactor.

The protein resides in the cytoplasm. The protein localises to the cytosol. The enzyme catalyses L-homoarginine + 2-oxoglutarate + O2 = 6-hydroxy-L-homoarginine + succinate + CO2. Its activity is regulated as follows. Slightly inhibited by canavanine (Can), the 5-oxa-analog of arginine. In terms of biological role, 2-oxoglutarate-dependent dioxygenase catalyzing homoarginine 6-hydroxylation thus producing 6-hydroxy-L-homoarginine. Guanidine (Gd) is in turn synthesized by the spontaneous conversion of 6-hydroxy-L-homoarginine to (S)-2-amino-6-oxohexanoate (RHEA:79843); guanidine is a nitrogen-rich compound that can serve as a defense or signaling substance. The protein is Homoarginine-6-hydroxylase 2-ODD-C23.1 of Arabidopsis thaliana (Mouse-ear cress).